A 271-amino-acid polypeptide reads, in one-letter code: Proteasome inhibitor PI31 subunit (271 aa).

An N-acetylalanine modification is found at Ala2. The segment at Ala2–Asn150 is important for homodimerization and interaction with FBXO7. Ser153 is subject to Phosphoserine. Residue Arg205 is modified to Omega-N-methylarginine. Arg219 carries the post-translational modification Asymmetric dimethylarginine. Residues Ile222–Leu271 are disordered. Arg231 is modified (omega-N-methylarginine). The segment covering Thr251 to Gly265 has biased composition (pro residues). Phosphoserine is present on Ser252.

It belongs to the proteasome inhibitor PI31 family. Monomer and homodimer. Interacts with FBXO7.

It localises to the cytoplasm. It is found in the endoplasmic reticulum. Its function is as follows. Plays an important role in control of proteasome function. Inhibits the hydrolysis of protein and peptide substrates by the 20S proteasome. Also inhibits the activation of the proteasome by the proteasome regulatory proteins PA700 and PA28. This chain is Proteasome inhibitor PI31 subunit (PSMF1), found in Pongo abelii (Sumatran orangutan).